Reading from the N-terminus, the 376-residue chain is Inactive CLIP domain-containing serine protease A28 (376 aa).

The signal sequence occupies residues 1–19 (MKVLLFCIVISLTTLIASG). Residues 24 to 80 (EELRCPGGYCVSKYLCPNGTFIDDIKHAQTTQLIGLRAGLDIDDFDDCNDYLLVCCQ) form the Clip domain. 3 disulfide bridges follow: Cys28-Cys78, Cys33-Cys71, and Cys39-Cys79. An N-linked (GlcNAc...) asparagine glycan is attached at Asn41. Positions 85–106 (PTATSTEKPATSDELIEPPPST) are disordered. Residues 114–364 (NEGGLIYDLR…YVQWLNEHIV (251 aa)) form the Peptidase S1 domain. Asn125 and Asn279 each carry an N-linked (GlcNAc...) asparagine glycan. Disulfide bonds link Cys251–Cys321, Cys280–Cys301, and Cys311–Cys340. A glycan (N-linked (GlcNAc...) asparagine) is linked at Asn369.

This sequence belongs to the peptidase S1 family. CLIP subfamily. As to quaternary structure, may form a heterodimer of a light chain and a heavy chain; disulfide-linked. Post-translationally, secreted as a full-length protein. Proteolytically cleaved into two chains which probably remain covalently linked. Cleavage is induced by fungus B.bassiana and Gram-positive or Gram-negative bacteria infection.

The protein localises to the secreted. Its function is as follows. Inactive serine protease which plays an essential role in the innate immune response against bacteria, fungi and protozoa infection by activating the melanization cascade. In the melanization cascade, acts downstream of TEP1, SPCLIP1 and CLIPA8 to promote CLIPC9 proteolytic cleavage. In the susceptible strain G3, appears to be dispensable for parasite P.berghei ookinete elimination which occurs by lysis. Required for the melanization of Gram-positive and Gram-negative bacteria. Required for the melanization of fungus B.bassiana. The protein is Inactive CLIP domain-containing serine protease A28 of Anopheles gambiae (African malaria mosquito).